Reading from the N-terminus, the 242-residue chain is 2-C-methyl-D-erythritol 4-phosphate cytidylyltransferase (242 aa).

It belongs to the IspD/TarI cytidylyltransferase family. IspD subfamily.

The enzyme catalyses 2-C-methyl-D-erythritol 4-phosphate + CTP + H(+) = 4-CDP-2-C-methyl-D-erythritol + diphosphate. It functions in the pathway isoprenoid biosynthesis; isopentenyl diphosphate biosynthesis via DXP pathway; isopentenyl diphosphate from 1-deoxy-D-xylulose 5-phosphate: step 2/6. Functionally, catalyzes the formation of 4-diphosphocytidyl-2-C-methyl-D-erythritol from CTP and 2-C-methyl-D-erythritol 4-phosphate (MEP). The polypeptide is 2-C-methyl-D-erythritol 4-phosphate cytidylyltransferase (Vesicomyosocius okutanii subsp. Calyptogena okutanii (strain HA)).